Consider the following 122-residue polypeptide: Serum amyloid A-1 protein (122 aa).

The N-terminal stretch at 1–19 is a signal peptide; the sequence is MKLLSGLLLCSLVLGVSSQ. An important for amyloid formation region spans residues 20–45; sequence RWFSFIGEATQGAWDMWRAYSDMREA. Residues 87–122 are disordered; that stretch reads MGHGAEDSMADQAANEWGRSGKDPNHFRPKGLPDKY. Positions 105–122 are enriched in basic and acidic residues; that stretch reads RSGKDPNHFRPKGLPDKY.

This sequence belongs to the SAA family. As to quaternary structure, homohexamer; dimer of trimers. Can form amyloid fibrils after partial proteolysis; the native, undenatured protein does not form amyloid fibrils (in vitro). Apolipoprotein of the HDL complex. Binds to heparin. Detected in liver.

It localises to the secreted. Functionally, major acute phase protein. The polypeptide is Serum amyloid A-1 protein (SAA1) (Oryctolagus cuniculus (Rabbit)).